The primary structure comprises 88 residues: Exodeoxyribonuclease 7 small subunit (88 aa).

This sequence belongs to the XseB family. As to quaternary structure, heterooligomer composed of large and small subunits.

Its subcellular location is the cytoplasm. It catalyses the reaction Exonucleolytic cleavage in either 5'- to 3'- or 3'- to 5'-direction to yield nucleoside 5'-phosphates.. Bidirectionally degrades single-stranded DNA into large acid-insoluble oligonucleotides, which are then degraded further into small acid-soluble oligonucleotides. The sequence is that of Exodeoxyribonuclease 7 small subunit from Tolumonas auensis (strain DSM 9187 / NBRC 110442 / TA 4).